A 361-amino-acid chain; its full sequence is Zygote arrest protein 1 (361 aa).

Disordered regions lie at residues 1–23, 98–128, and 148–252; these read MFPA…AGDG, QPAG…PRSW, and VAGG…EQDK. Thr154 carries the post-translational modification Phosphothreonine; by CDK1. Ser161 carries the post-translational modification Phosphoserine; by CDK1. A compositionally biased stretch (basic and acidic residues) spans 168–177; it reads REPEPREVAA. The 3CxxC-type zinc finger occupies 263 to 346; sequence KYGYYHCKDC…RQDLCGRCKD (84 aa).

Belongs to the ZAR1 family. In terms of assembly, interacts with YBX2. In terms of processing, phosphorylation by CDK1 does not regulate formation of MARDO (mitochondria-associated ribonucleoprotein domain) membraneless compartment. Ubiquitinated and degradaded by the proteasome during oocyte meiotic maturation, leading to MARDO (mitochondria-associated ribonucleoprotein domain) membraneless compartment dissolution. Ovary. Expressed in primary oocytes (from primary through antral follicle stages) and during the progression from Meiosis I to Meiosis II. The mRNA is detected in growing oocytes (early primary follicle, type 3a) through fully grown oocytes (antral follicle, type 8).

The protein resides in the cytoplasm. It is found in the cytoplasmic ribonucleoprotein granule. Functionally, mRNA-binding protein that mediates formation of MARDO (mitochondria-associated ribonucleoprotein domain), a membraneless compartment that stores maternal mRNAs in oocytes. MARDO assembly around mitochondria is directed by an increase in mitochondrial membrane potential during oocyte growth. Promotes formation of MARDO phase-separated membraneless compartment by undergoing liquid-liquid phase separation upon binding to maternal mRNAs. Binds to the 3'-UTR of maternal mRNAs. Maternal mRNAs stored in the MARDO are translationally repressed. Essential for female fertility and oocyte-to-embryo transition by coordinating maternal mRNA storage, translation and degradation. This Mus musculus (Mouse) protein is Zygote arrest protein 1.